A 416-amino-acid polypeptide reads, in one-letter code: MNKQSWLLNLSLLKTHPAFRAVFLARFISIVSLGLLGVAVPVQIQMMTHSTWQVGLSVTLTGGAMFVGLMVGGVLADRYERKKVILLARGTCGIGFIGLCLNALLPEPSLLAIYLLGLWDGFFASLGVTALLAATPALVGRENLMQAGAITMLTVRLGSVISPMIGGLLLATGGVAWNYGLAAAGTFITLLPLLSLPALPPPPQPREHPLKSLLAGFRFLLASPLVGGIALLGGLLTMASAVRVLYPALADNWQMSAAQIGFLYAAIPLGAAIGALTSGKLAHSARPGLLMLLSTLGSFLAIGLFGLMPMWILGVVCLALFGWLSAVSSLLQYTMLQTQTPEAMLGRINGLWTAQNVTGDAIGAALLGGLGAMMTPVASASASGFGLLIIGVLLLLVLVELRRFRQTPPQMTASDS.

Over Met1–Ala21 the chain is Cytoplasmic. Residues Val22 to Val42 traverse the membrane as a helical segment. At Gln43–Gly55 the chain is on the periplasmic side. Residues Leu56–Ala76 traverse the membrane as a helical segment. Residues Asp77 to Lys83 are Cytoplasmic-facing. The chain crosses the membrane as a helical span at residues Val84 to Leu104. The Periplasmic segment spans residues Leu105–Ser109. The chain crosses the membrane as a helical span at residues Leu110–Ala130. At Leu131 to Arg156 the chain is on the cytoplasmic side. The helical transmembrane segment at Leu157–Trp177 threads the bilayer. Residue Asn178 is a topological domain, periplasmic. A helical transmembrane segment spans residues Tyr179–Leu199. Residues Pro200 to Arg218 are Cytoplasmic-facing. A helical transmembrane segment spans residues Phe219–Ala239. Over Ser240–Ser256 the chain is Periplasmic. A helical transmembrane segment spans residues Ala257–Thr277. Topologically, residues Ser278–Pro287 are cytoplasmic. Residues Gly288–Leu307 traverse the membrane as a helical segment. At Met308–Leu313 the chain is on the periplasmic side. The chain crosses the membrane as a helical span at residues Gly314–Leu336. Topologically, residues Gln337–Asn356 are cytoplasmic. The helical transmembrane segment at Val357–Val377 threads the bilayer. A topological domain (periplasmic) is located at residue Ala378. The helical transmembrane segment at Ser379 to Val399 threads the bilayer. Residues Glu400–Ser416 are Cytoplasmic-facing.

The protein belongs to the major facilitator superfamily. EntS (TC 2.A.1.38) family.

It localises to the cell inner membrane. Component of an export pathway for enterobactin. This chain is Enterobactin exporter EntS, found in Escherichia coli O7:K1 (strain IAI39 / ExPEC).